The sequence spans 853 residues: MSTIENFDAHTPMMQQYLKLKAQHPEILLFYRMGDFYELFYDDAKRASQLLDISLTKRGASAGEPIPMAGIPYHAVENYLAKLVNQGESVAICEQIGDPATSKGPVERKVVRIVTPGTISDEALLQERQDNLLAAIWQDSKGFGYATLDISSGRFRLSEPADRETMVAELQRTNPAELLYAEDFAEMSLIEGRRGLRRRPLWEFEIDTARQQLNLQFGTRDLVGFGVENAPRGLCAAGCLLQYAKDTQRTTLPHIRSITMERQQDSIIMDAATRRNLEITQNLAGGAENTLASVLDCTVTPMGSRMLKRWLHMPVRDTRVLLERQQTIGALQDFTAELQPVLRQVGDLERILARLALRTARPRDLARMRHAFQQLPELRAQLENVDSAPVQALREKMGEFAELRDLLERAIIDTPPVLVRDGGVIASGYNEELDEWRALADGATDYLERLEVRERERTGLDTLKVGFNAVHGYYIQISRGQSHLAPINYMRRQTLKNAERYIIPELKEYEDKVLTSKGKALALEKQLYEELFDLLLPHLEALQQSASALAELDVLVNLAERAYTLNYTCPTFIDKPGIRITEGRHPVVEQVLNEPFIANPLNLSPQRRMLIITGPNMGGKSTYMRQTALIALMAYIGSYVPAQKVEIGPIDRIFTRVGAADDLASGRSTFMVEMTETANILHNATEYSLVLMDEIGRGTSTYDGLSLAWACAENLANKIKALTLFATHYFELTQLPEKMEGVANVHLDALEHGDTIAFMHSVQDGAASKSYGLAVAALAGVPKEVIKRARQKLRELESISPNAAATQVDGTQMSLLSVPEETSPAVEALENLDPDSLTPRQALEWIYRLKSLV.

614 to 621 (GPNMGGKS) is a binding site for ATP.

The protein belongs to the DNA mismatch repair MutS family.

Its function is as follows. This protein is involved in the repair of mismatches in DNA. It is possible that it carries out the mismatch recognition step. This protein has a weak ATPase activity. The polypeptide is DNA mismatch repair protein MutS (Escherichia coli O81 (strain ED1a)).